The primary structure comprises 122 residues: Large ribosomal subunit protein uL14 (122 aa).

Belongs to the universal ribosomal protein uL14 family. Part of the 50S ribosomal subunit. Forms a cluster with proteins L3 and L19. In the 70S ribosome, L14 and L19 interact and together make contacts with the 16S rRNA in bridges B5 and B8.

Functionally, binds to 23S rRNA. Forms part of two intersubunit bridges in the 70S ribosome. The sequence is that of Large ribosomal subunit protein uL14 from Thermotoga maritima (strain ATCC 43589 / DSM 3109 / JCM 10099 / NBRC 100826 / MSB8).